A 444-amino-acid chain; its full sequence is Phosphoglucosamine mutase (444 aa).

Ser-104 functions as the Phosphoserine intermediate in the catalytic mechanism. Mg(2+)-binding residues include Ser-104, Asp-243, Asp-245, and Asp-247. Position 104 is a phosphoserine (Ser-104).

This sequence belongs to the phosphohexose mutase family. Mg(2+) is required as a cofactor. In terms of processing, activated by phosphorylation.

The enzyme catalyses alpha-D-glucosamine 1-phosphate = D-glucosamine 6-phosphate. Catalyzes the conversion of glucosamine-6-phosphate to glucosamine-1-phosphate. The polypeptide is Phosphoglucosamine mutase (Neisseria meningitidis serogroup C (strain 053442)).